Reading from the N-terminus, the 524-residue chain is GMP synthase [glutamine-hydrolyzing] (524 aa).

In terms of domain architecture, Glutamine amidotransferase type-1 spans 9–207; that stretch reads RILILDFGSQ…VIHICQCIPN (199 aa). The Nucleophile role is filled by Cys-86. Active-site residues include His-181 and Glu-183. Residues 208 to 399 enclose the GMPS ATP-PPase domain; the sequence is WTTKHIIEDS…LGLPADLIYR (192 aa). Residue 235 to 241 participates in ATP binding; the sequence is SGGVDSA.

As to quaternary structure, homodimer.

The enzyme catalyses XMP + L-glutamine + ATP + H2O = GMP + L-glutamate + AMP + diphosphate + 2 H(+). It functions in the pathway purine metabolism; GMP biosynthesis; GMP from XMP (L-Gln route): step 1/1. Catalyzes the synthesis of GMP from XMP. This is GMP synthase [glutamine-hydrolyzing] from Coxiella burnetii (strain RSA 331 / Henzerling II).